Consider the following 24-residue polypeptide: Brevinin-1Bf (24 aa).

An intrachain disulfide couples Cys-18 to Cys-24.

In terms of tissue distribution, expressed by the skin glands.

It localises to the secreted. Functionally, antibacterial activity against Gram-positive bacterium S.aureus and Gram-negative bacterium E.coli. The polypeptide is Brevinin-1Bf (Lithobates berlandieri (Rio Grande leopard frog)).